The chain runs to 346 residues: Putative D-threonate 4-phosphate dehydrogenase (346 aa).

Residues His-141 and Thr-142 each coordinate substrate. A divalent metal cation-binding residues include His-171, His-215, and His-270. Residues Lys-278 and Arg-296 each contribute to the substrate site.

This sequence belongs to the PdxA family. PdxA2 subfamily. Homodimer. The cofactor is a divalent metal cation.

It carries out the reaction 4-O-phospho-D-threonate + NAD(+) = dihydroxyacetone phosphate + CO2 + NADH. Functionally, catalyzes the NAD-dependent oxidation and subsequent decarboxylation of D-threonate 4-phosphate to produce dihydroxyacetone phosphate (DHAP). The protein is Putative D-threonate 4-phosphate dehydrogenase of Cutibacterium acnes (strain DSM 16379 / KPA171202) (Propionibacterium acnes).